A 258-amino-acid chain; its full sequence is Octanoyltransferase (258 aa).

The BPL/LPL catalytic domain maps to 42–226 (NLGADTLLLL…AVVAALDGAL (185 aa)). Substrate-binding positions include 80–87 (RGGKITWH), 156–158 (AIG), and 169–171 (GFS). C187 serves as the catalytic Acyl-thioester intermediate.

It belongs to the LipB family.

Its subcellular location is the cytoplasm. It catalyses the reaction octanoyl-[ACP] + L-lysyl-[protein] = N(6)-octanoyl-L-lysyl-[protein] + holo-[ACP] + H(+). It participates in protein modification; protein lipoylation via endogenous pathway; protein N(6)-(lipoyl)lysine from octanoyl-[acyl-carrier-protein]: step 1/2. Catalyzes the transfer of endogenously produced octanoic acid from octanoyl-acyl-carrier-protein onto the lipoyl domains of lipoate-dependent enzymes. Lipoyl-ACP can also act as a substrate although octanoyl-ACP is likely to be the physiological substrate. In Rhodococcus opacus (strain B4), this protein is Octanoyltransferase.